The chain runs to 417 residues: 3-oxoacyl-[acyl-carrier-protein] synthase 2 (417 aa).

The Ketosynthase family 3 (KS3) domain maps to 10–416; the sequence is FPYVVVTGIA…GHNVAIAFGR (407 aa). Residues C170, H311, and H346 each act as for beta-ketoacyl synthase activity in the active site.

Belongs to the thiolase-like superfamily. Beta-ketoacyl-ACP synthases family.

The protein localises to the cytoplasm. The catalysed reaction is an ultra-long-chain di-unsaturated fatty acyl-[ACP] + malonyl-[ACP] + H(+) = a 3-oxo-ultra-long-chain di-unsaturated fatty acyl-[ACP] + holo-[ACP] + CO2. The protein operates within lipid metabolism; mycolic acid biosynthesis. Part of the mycobacterial fatty acid elongation system FAS-II, which is involved in mycolic acid biosynthesis. Catalyzes the elongation of long chain acyl-ACP substrates by the addition of two carbons from malonyl-ACP to an acyl acceptor. Involved in extension of the mycolate chains to full lengths and produces longer chain multiunsaturated hydrocarbons averaging 54 carbons in length. This chain is 3-oxoacyl-[acyl-carrier-protein] synthase 2 (kasB), found in Mycobacterium bovis (strain ATCC BAA-935 / AF2122/97).